The sequence spans 120 residues: uncharacterized protein (120 aa).

Residues serine 90 to arginine 120 are disordered.

This is an uncharacterized protein from Homo sapiens (Human).